The chain runs to 507 residues: Glycerol kinase (507 aa).

Threonine 12 serves as a coordination point for ADP. Threonine 12, threonine 13, and serine 14 together coordinate ATP. Threonine 12 is a sn-glycerol 3-phosphate binding site. Residue arginine 16 participates in ADP binding. Residues arginine 82, glutamate 83, tyrosine 134, and aspartate 250 each contribute to the sn-glycerol 3-phosphate site. Residues arginine 82, glutamate 83, tyrosine 134, aspartate 250, and glutamine 251 each contribute to the glycerol site. Threonine 272 and glycine 316 together coordinate ADP. 4 residues coordinate ATP: threonine 272, glycine 316, glutamine 320, and glycine 417. Residues glycine 417 and asparagine 421 each coordinate ADP.

Belongs to the FGGY kinase family.

It catalyses the reaction glycerol + ATP = sn-glycerol 3-phosphate + ADP + H(+). Its pathway is polyol metabolism; glycerol degradation via glycerol kinase pathway; sn-glycerol 3-phosphate from glycerol: step 1/1. With respect to regulation, inhibited by fructose 1,6-bisphosphate (FBP). Its function is as follows. Key enzyme in the regulation of glycerol uptake and metabolism. Catalyzes the phosphorylation of glycerol to yield sn-glycerol 3-phosphate. The polypeptide is Glycerol kinase (Beijerinckia indica subsp. indica (strain ATCC 9039 / DSM 1715 / NCIMB 8712)).